Consider the following 154-residue polypeptide: Large ribosomal subunit protein uL13 (154 aa).

Belongs to the universal ribosomal protein uL13 family. As to quaternary structure, part of the 50S ribosomal subunit.

Functionally, this protein is one of the early assembly proteins of the 50S ribosomal subunit, although it is not seen to bind rRNA by itself. It is important during the early stages of 50S assembly. This chain is Large ribosomal subunit protein uL13, found in Borrelia garinii subsp. bavariensis (strain ATCC BAA-2496 / DSM 23469 / PBi) (Borreliella bavariensis).